The primary structure comprises 200 residues: Probable nicotinate-nucleotide adenylyltransferase (200 aa).

It belongs to the NadD family.

The catalysed reaction is nicotinate beta-D-ribonucleotide + ATP + H(+) = deamido-NAD(+) + diphosphate. It functions in the pathway cofactor biosynthesis; NAD(+) biosynthesis; deamido-NAD(+) from nicotinate D-ribonucleotide: step 1/1. In terms of biological role, catalyzes the reversible adenylation of nicotinate mononucleotide (NaMN) to nicotinic acid adenine dinucleotide (NaAD). This chain is Probable nicotinate-nucleotide adenylyltransferase, found in Clostridium botulinum (strain Eklund 17B / Type B).